A 522-amino-acid chain; its full sequence is Lysine--tRNA ligase (522 aa).

Positions 44–52 (PSGLPHIGT) match the 'HIGH' region motif. Positions 290–294 (KISKS) match the 'KMSKS' region motif. Lys293 contacts ATP.

Belongs to the class-I aminoacyl-tRNA synthetase family.

Its subcellular location is the cytoplasm. It catalyses the reaction tRNA(Lys) + L-lysine + ATP = L-lysyl-tRNA(Lys) + AMP + diphosphate. The polypeptide is Lysine--tRNA ligase (Rickettsia bellii (strain RML369-C)).